The sequence spans 518 residues: Retinal dehydrogenase 2 (518 aa).

Tyrosine 168 is modified (phosphotyrosine). NAD(+)-binding positions include 184 to 186 (IPW), 210 to 213 (KPAE), and 264 to 266 (STE). Catalysis depends on glutamate 286, which acts as the Proton acceptor. Residue cysteine 320 is the Nucleophile of the active site. Residue serine 351 is modified to Phosphoserine. Residues 366 to 370 (KQYNK) and glutamate 417 each bind NAD(+).

The protein belongs to the aldehyde dehydrogenase family. Homotetramer.

The protein localises to the cytoplasm. The catalysed reaction is retinal + NAD(+) + H2O = retinoate + NADH + 2 H(+). It carries out the reaction all-trans-retinal + NAD(+) + H2O = all-trans-retinoate + NADH + 2 H(+). It catalyses the reaction all-trans-13,14-dihydroretinal + NAD(+) + H2O = all-trans-13,14-dihydroretinoate + NADH + 2 H(+). It functions in the pathway cofactor metabolism; retinol metabolism. In terms of biological role, catalyzes the NAD-dependent oxidation of aldehyde substrates, such as all-trans-retinal and all-trans-13,14-dihydroretinal, to their corresponding carboxylic acids, all-trans-retinoate and all-trans-13,14-dihydroretinoate, respectively. Retinoate signaling is critical for the transcriptional control of many genes, for instance it is crucial for initiation of meiosis in both male and female. Recognizes retinal as substrate, both in its free form and when bound to cellular retinol-binding protein. Can metabolize octanal and decanal, but has only very low activity with benzaldehyde, acetaldehyde and propanal. Displays complete lack of activity with citral. The protein is Retinal dehydrogenase 2 (ALDH1A2) of Homo sapiens (Human).